A 234-amino-acid chain; its full sequence is tRNA (guanine-N(1)-)-methyltransferase (234 aa).

S-adenosyl-L-methionine is bound by residues Gly-112 and 132–137 (IGDFIL).

Belongs to the RNA methyltransferase TrmD family. As to quaternary structure, homodimer.

Its subcellular location is the cytoplasm. It catalyses the reaction guanosine(37) in tRNA + S-adenosyl-L-methionine = N(1)-methylguanosine(37) in tRNA + S-adenosyl-L-homocysteine + H(+). Its function is as follows. Specifically methylates guanosine-37 in various tRNAs. This is tRNA (guanine-N(1)-)-methyltransferase from Campylobacter jejuni subsp. jejuni serotype O:6 (strain 81116 / NCTC 11828).